A 1154-amino-acid polypeptide reads, in one-letter code: DNA-directed RNA polymerase subunit beta (1154 aa).

Positions 1108–1123 are enriched in basic and acidic residues; it reads ELGIDIQGEDRSERAG. The segment at 1108–1136 is disordered; the sequence is ELGIDIQGEDRSERAGEPASPDEMDDEEE. Residues 1127–1136 are compositionally biased toward acidic residues; the sequence is SPDEMDDEEE.

It belongs to the RNA polymerase beta chain family. The RNAP catalytic core consists of 2 alpha, 1 beta, 1 beta' and 1 omega subunit. When a sigma factor is associated with the core the holoenzyme is formed, which can initiate transcription.

It carries out the reaction RNA(n) + a ribonucleoside 5'-triphosphate = RNA(n+1) + diphosphate. DNA-dependent RNA polymerase catalyzes the transcription of DNA into RNA using the four ribonucleoside triphosphates as substrates. This Heliobacterium modesticaldum (strain ATCC 51547 / Ice1) protein is DNA-directed RNA polymerase subunit beta.